We begin with the raw amino-acid sequence, 1065 residues long: Carbamoyl phosphate synthase large chain (1065 aa).

Residues 1 to 401 (MPLDKTIKKV…ALLKAVTSLE (401 aa)) form a carboxyphosphate synthetic domain region. Residues Arg129, Arg169, Gly175, Gly176, Gln208, Val210, Glu215, Gly241, Val242, His243, Gln284, and Glu298 each coordinate ATP. The 195-residue stretch at 133 to 327 (KNLMEEIDEP…IAKIAAKIAV (195 aa)) folds into the ATP-grasp 1 domain. Residues Gln284, Glu298, and Asn300 each coordinate Mg(2+). Mn(2+)-binding residues include Gln284, Glu298, and Asn300. The segment at 402-548 (GKISGLRLEK…YSSYENEDEN (147 aa)) is oligomerization domain. The carbamoyl phosphate synthetic domain stretch occupies residues 549–931 (EVTDDKKIVV…AIYKGFRAAG (383 aa)). Positions 673-863 (SELLKELNIP…MVKLAVEILT (191 aa)) constitute an ATP-grasp 2 domain. ATP contacts are provided by Arg709, Lys748, Ile750, Glu754, Gly779, Val780, His781, Ser782, Gln822, and Glu834. Positions 822, 834, and 836 each coordinate Mg(2+). Mn(2+)-binding residues include Gln822, Glu834, and Asn836. The region spanning 932 to 1065 (IEVPKDGGNL…EYRAMKEYFK (134 aa)) is the MGS-like domain. An allosteric domain region spans residues 932 to 1065 (IEVPKDGGNL…EYRAMKEYFK (134 aa)).

This sequence belongs to the CarB family. As to quaternary structure, composed of two chains; the small (or glutamine) chain promotes the hydrolysis of glutamine to ammonia, which is used by the large (or ammonia) chain to synthesize carbamoyl phosphate. Tetramer of heterodimers (alpha,beta)4. Requires Mg(2+) as cofactor. The cofactor is Mn(2+).

It catalyses the reaction hydrogencarbonate + L-glutamine + 2 ATP + H2O = carbamoyl phosphate + L-glutamate + 2 ADP + phosphate + 2 H(+). It carries out the reaction hydrogencarbonate + NH4(+) + 2 ATP = carbamoyl phosphate + 2 ADP + phosphate + 2 H(+). It functions in the pathway amino-acid biosynthesis; L-arginine biosynthesis; carbamoyl phosphate from bicarbonate: step 1/1. It participates in pyrimidine metabolism; UMP biosynthesis via de novo pathway; (S)-dihydroorotate from bicarbonate: step 1/3. Its function is as follows. Large subunit of the glutamine-dependent carbamoyl phosphate synthetase (CPSase). CPSase catalyzes the formation of carbamoyl phosphate from the ammonia moiety of glutamine, carbonate, and phosphate donated by ATP, constituting the first step of 2 biosynthetic pathways, one leading to arginine and/or urea and the other to pyrimidine nucleotides. The large subunit (synthetase) binds the substrates ammonia (free or transferred from glutamine from the small subunit), hydrogencarbonate and ATP and carries out an ATP-coupled ligase reaction, activating hydrogencarbonate by forming carboxy phosphate which reacts with ammonia to form carbamoyl phosphate. In Clostridium acetobutylicum (strain ATCC 824 / DSM 792 / JCM 1419 / IAM 19013 / LMG 5710 / NBRC 13948 / NRRL B-527 / VKM B-1787 / 2291 / W), this protein is Carbamoyl phosphate synthase large chain.